The sequence spans 1195 residues: Probable beta-tubulin polyglutamylase (1195 aa).

Residues 1–110 form a disordered region; the sequence is MSQKDIYNKY…QTEMTDNQNE (110 aa). 2 stretches are compositionally biased toward acidic residues: residues 17 to 27 and 44 to 79; these read DQQEEDDDENQ and QGEDLDEDQGVIGEDDEEQEESYDEEDEEEDDEENN. Coiled coils occupy residues 59 to 103 and 144 to 260; these read DEEQ…QQTE and QDMD…QSEQ. Residues 80-89 show a composition bias toward low complexity; it reads QDQQNNSESN. Residues 90–110 are compositionally biased toward polar residues; the sequence is LQYDKTNQKNQQTEMTDNQNE. The interval 281–343 is disordered; that stretch reads PKNDVDQYTG…NKKEQAKKQQ (63 aa). Positions 294–316 are enriched in acidic residues; sequence DSGESDEEANNEDDDEDEDDESE. A compositionally biased stretch (basic residues) spans 322-334; the sequence is RKNKAQLLKKKNN. Residues 350-703 form the TTL domain; it reads KQTLVLNVAD…TCKAKNEIIN (354 aa). Residues 500–503, K513, and D515 contribute to the ATP site; that span reads QRYL. The segment at 674–756 is c-MTBD region; it reads PLDSYIKKNT…GFERIFPMED (83 aa). Residues 783-862 are disordered; sequence RNTKKVTEDP…ETIQCEDQEQ (80 aa). Residues 825 to 849 show a composition bias toward polar residues; that stretch reads PNSQTTINKGIPGQNGQRPSSSQLN. The span at 850–860 shows a compositional bias: acidic residues; the sequence is EEGETIQCEDQ.

Its subcellular location is the cytoplasm. The protein resides in the cytoskeleton. It is found in the cell projection. The protein localises to the cilium. It localises to the cilium basal body. Probable tubulin polyglutamylase with a strong preference for beta-tubulin. In Tetrahymena thermophila (strain SB210), this protein is Probable beta-tubulin polyglutamylase (Ttll6a).